The sequence spans 374 residues: CC-adding tRNA nucleotidyltransferase (374 aa).

A CTP-binding site is contributed by 39–42 (GAVR). Mg(2+)-binding residues include Asp-52 and Asp-54. Residues 126-127 (RD), Asn-131, 171-180 (DASRLVRAAR), and Arg-209 each bind CTP.

This sequence belongs to the tRNA nucleotidyltransferase/poly(A) polymerase family. It depends on Mg(2+) as a cofactor.

It carries out the reaction a tRNA precursor + 2 CTP = a tRNA with a 3' CC end + 2 diphosphate. TRNA nucleotidyltransferase involved in the synthesis of the tRNA CCA terminus. Adds the two cytidine residues to tRNA. This is CC-adding tRNA nucleotidyltransferase from Deinococcus radiodurans (strain ATCC 13939 / DSM 20539 / JCM 16871 / CCUG 27074 / LMG 4051 / NBRC 15346 / NCIMB 9279 / VKM B-1422 / R1).